We begin with the raw amino-acid sequence, 80 residues long: Exodeoxyribonuclease 7 small subunit (80 aa).

The protein belongs to the XseB family. In terms of assembly, heterooligomer composed of large and small subunits.

The protein localises to the cytoplasm. The catalysed reaction is Exonucleolytic cleavage in either 5'- to 3'- or 3'- to 5'-direction to yield nucleoside 5'-phosphates.. Functionally, bidirectionally degrades single-stranded DNA into large acid-insoluble oligonucleotides, which are then degraded further into small acid-soluble oligonucleotides. The polypeptide is Exodeoxyribonuclease 7 small subunit (Rickettsia conorii (strain ATCC VR-613 / Malish 7)).